Here is a 54-residue protein sequence, read N- to C-terminus: UPF0391 membrane protein TERTU_3637 (54 aa).

The next 2 helical transmembrane spans lie at 4–24 (WALVFLIFALVAGVLGFTGLA) and 29–49 (SIAWILFVVGLIVSLIFLVAG).

Belongs to the UPF0391 family.

It is found in the cell membrane. This chain is UPF0391 membrane protein TERTU_3637, found in Teredinibacter turnerae (strain ATCC 39867 / T7901).